The chain runs to 162 residues: ATP synthase subunit b', chloroplastic (162 aa).

Residues 26 to 46 form a helical membrane-spanning segment; the sequence is ATLPLQALQFILLTVLLTFIF.

Belongs to the ATPase B chain family. In terms of assembly, F-type ATPases have 2 components, F(1) - the catalytic core - and F(0) - the membrane proton channel. F(1) has five subunits: alpha(3), beta(3), gamma(1), delta(1), epsilon(1). F(0) has four main subunits: a(1), b(1), b'(1) and c(10-14). The alpha and beta chains form an alternating ring which encloses part of the gamma chain. F(1) is attached to F(0) by a central stalk formed by the gamma and epsilon chains, while a peripheral stalk is formed by the delta, b and b' chains.

It is found in the plastid. The protein localises to the chloroplast thylakoid membrane. In terms of biological role, f(1)F(0) ATP synthase produces ATP from ADP in the presence of a proton or sodium gradient. F-type ATPases consist of two structural domains, F(1) containing the extramembraneous catalytic core and F(0) containing the membrane proton channel, linked together by a central stalk and a peripheral stalk. During catalysis, ATP synthesis in the catalytic domain of F(1) is coupled via a rotary mechanism of the central stalk subunits to proton translocation. Component of the F(0) channel, it forms part of the peripheral stalk, linking F(1) to F(0). The b'-subunit is a diverged and duplicated form of b found in plants and photosynthetic bacteria. This Emiliania huxleyi (Coccolithophore) protein is ATP synthase subunit b', chloroplastic.